Consider the following 549-residue polypeptide: Speedy protein E3 (549 aa).

Positions 1-15 are enriched in low complexity; that stretch reads MTSHQPQPQEEQSPQ. Disordered regions lie at residues 1–74, 126–145, 188–218, 261–291, and 334–364; these read MTSH…EPEE, KREC…APEP, and SPPR…APEP. Composition is skewed to acidic residues over residues 58–74, 131–145, 204–218, 277–291, and 350–364; these read DESD…EPEE and DESD…APEP.

The protein belongs to the Speedy/Ringo family. In terms of tissue distribution, predominantly expressed in testis and spleen.

This is Speedy protein E3 from Homo sapiens (Human).